The chain runs to 738 residues: 1,4-alpha-glucan branching enzyme GlgB (738 aa).

Residue Asp399 is the Nucleophile of the active site. The Proton donor role is filled by Glu452.

Belongs to the glycosyl hydrolase 13 family. GlgB subfamily. As to quaternary structure, monomer.

It catalyses the reaction Transfers a segment of a (1-&gt;4)-alpha-D-glucan chain to a primary hydroxy group in a similar glucan chain.. Its pathway is glycan biosynthesis; glycogen biosynthesis. In terms of biological role, catalyzes the formation of the alpha-1,6-glucosidic linkages in glycogen by scission of a 1,4-alpha-linked oligosaccharide from growing alpha-1,4-glucan chains and the subsequent attachment of the oligosaccharide to the alpha-1,6 position. The sequence is that of 1,4-alpha-glucan branching enzyme GlgB from Chlamydia trachomatis serovar D (strain ATCC VR-885 / DSM 19411 / UW-3/Cx).